Here is a 427-residue protein sequence, read N- to C-terminus: UPF0229 protein YeaH (427 aa).

The segment covering 79–90 has biased composition (basic and acidic residues); that stretch reads NDHFVQNDRIER. Residues 79-110 are disordered; that stretch reads NDHFVQNDRIERPQGGGGGSGSGQGQASQDGE. Positions 92–102 are enriched in gly residues; sequence QGGGGGSGSGQ.

Belongs to the UPF0229 family.

The protein is UPF0229 protein YeaH of Escherichia coli (strain K12 / MC4100 / BW2952).